The primary structure comprises 351 residues: Ribosomal RNA large subunit methyltransferase M (351 aa).

Residues Ser186, 219-222 (APGG), Asp238, Asp258, and Asp274 each bind S-adenosyl-L-methionine. Catalysis depends on Lys303, which acts as the Proton acceptor.

This sequence belongs to the class I-like SAM-binding methyltransferase superfamily. RNA methyltransferase RlmE family. RlmM subfamily. Monomer.

The protein resides in the cytoplasm. The catalysed reaction is cytidine(2498) in 23S rRNA + S-adenosyl-L-methionine = 2'-O-methylcytidine(2498) in 23S rRNA + S-adenosyl-L-homocysteine + H(+). Functionally, catalyzes the 2'-O-methylation at nucleotide C2498 in 23S rRNA. The sequence is that of Ribosomal RNA large subunit methyltransferase M from Xylella fastidiosa (strain 9a5c).